The sequence spans 243 residues: Ubiquinone/menaquinone biosynthesis C-methyltransferase UbiE (243 aa).

S-adenosyl-L-methionine is bound by residues T69, D90, and 116–117 (DA).

This sequence belongs to the class I-like SAM-binding methyltransferase superfamily. MenG/UbiE family.

It carries out the reaction a 2-demethylmenaquinol + S-adenosyl-L-methionine = a menaquinol + S-adenosyl-L-homocysteine + H(+). The enzyme catalyses a 2-methoxy-6-(all-trans-polyprenyl)benzene-1,4-diol + S-adenosyl-L-methionine = a 5-methoxy-2-methyl-3-(all-trans-polyprenyl)benzene-1,4-diol + S-adenosyl-L-homocysteine + H(+). It functions in the pathway quinol/quinone metabolism; menaquinone biosynthesis; menaquinol from 1,4-dihydroxy-2-naphthoate: step 2/2. The protein operates within cofactor biosynthesis; ubiquinone biosynthesis. Its function is as follows. Methyltransferase required for the conversion of demethylmenaquinol (DMKH2) to menaquinol (MKH2) and the conversion of 2-polyprenyl-6-methoxy-1,4-benzoquinol (DDMQH2) to 2-polyprenyl-3-methyl-6-methoxy-1,4-benzoquinol (DMQH2). This Cupriavidus taiwanensis (strain DSM 17343 / BCRC 17206 / CCUG 44338 / CIP 107171 / LMG 19424 / R1) (Ralstonia taiwanensis (strain LMG 19424)) protein is Ubiquinone/menaquinone biosynthesis C-methyltransferase UbiE.